A 255-amino-acid chain; its full sequence is Type III pantothenate kinase (255 aa).

Position 6–13 (6–13 (DVGNTNIV)) interacts with ATP. Substrate is bound by residues tyrosine 100 and 107 to 110 (GADR). Catalysis depends on aspartate 109, which acts as the Proton acceptor. Aspartate 129 is a K(+) binding site. Position 132 (threonine 132) interacts with ATP. Threonine 184 serves as a coordination point for substrate.

This sequence belongs to the type III pantothenate kinase family. Homodimer. NH4(+) is required as a cofactor. K(+) serves as cofactor.

The protein resides in the cytoplasm. It carries out the reaction (R)-pantothenate + ATP = (R)-4'-phosphopantothenate + ADP + H(+). It functions in the pathway cofactor biosynthesis; coenzyme A biosynthesis; CoA from (R)-pantothenate: step 1/5. Catalyzes the phosphorylation of pantothenate (Pan), the first step in CoA biosynthesis. The sequence is that of Type III pantothenate kinase from Thermoanaerobacter sp. (strain X514).